The following is a 347-amino-acid chain: Biotin synthase (347 aa).

Residues 54–273 form the Radical SAM core domain; the sequence is NHVETASLLS…IAVARIMMPK (220 aa). Cys-69, Cys-73, and Cys-76 together coordinate [4Fe-4S] cluster. 4 residues coordinate [2Fe-2S] cluster: Cys-113, Cys-144, Cys-204, and Arg-277.

The protein belongs to the radical SAM superfamily. Biotin synthase family. In terms of assembly, homodimer. Requires [4Fe-4S] cluster as cofactor. [2Fe-2S] cluster is required as a cofactor.

The enzyme catalyses (4R,5S)-dethiobiotin + (sulfur carrier)-SH + 2 reduced [2Fe-2S]-[ferredoxin] + 2 S-adenosyl-L-methionine = (sulfur carrier)-H + biotin + 2 5'-deoxyadenosine + 2 L-methionine + 2 oxidized [2Fe-2S]-[ferredoxin]. It functions in the pathway cofactor biosynthesis; biotin biosynthesis; biotin from 7,8-diaminononanoate: step 2/2. Functionally, catalyzes the conversion of dethiobiotin (DTB) to biotin by the insertion of a sulfur atom into dethiobiotin via a radical-based mechanism. The chain is Biotin synthase from Afipia carboxidovorans (strain ATCC 49405 / DSM 1227 / KCTC 32145 / OM5) (Oligotropha carboxidovorans).